Here is a 266-residue protein sequence, read N- to C-terminus: Stomatin homolog PH1511 (266 aa).

The helical transmembrane segment at 7–27 threads the bilayer; it reads FFVTSIILLFILIFLASAIKI. Coiled-coil stretches lie at residues 125–152 and 178–213; these read GQAHLDELLSERDKLNMQLQRIIDEATD and RQAEAERERRARITLAEAERQAAEKLREAAEIISEH.

Belongs to the band 7/mec-2 family. Homotrimer. Interacts with PH1510 and is cleaved by PH1510.

It is found in the membrane. The polypeptide is Stomatin homolog PH1511 (Pyrococcus horikoshii (strain ATCC 700860 / DSM 12428 / JCM 9974 / NBRC 100139 / OT-3)).